A 416-amino-acid polypeptide reads, in one-letter code: Cysteate synthase (416 aa).

Lys-104 carries the post-translational modification N6-(pyridoxal phosphate)lysine. Residue Asn-130 coordinates pyridoxal 5'-phosphate.

It belongs to the threonine synthase family. Cysteate synthase subfamily. Homotrimer. Pyridoxal 5'-phosphate is required as a cofactor.

The enzyme catalyses O-phospho-L-serine + sulfite + H(+) = L-cysteate + phosphate. Its pathway is cofactor biosynthesis; coenzyme M biosynthesis. Specifically catalyzes the beta-elimination of phosphate from L-phosphoserine and the beta-addition of sulfite to the dehydroalanine intermediate to produce L-cysteate. This chain is Cysteate synthase, found in Methanosarcina barkeri (strain Fusaro / DSM 804).